Here is a 248-residue protein sequence, read N- to C-terminus: MDYHIAILNADTPMVEITSAYGDYADMVKSLLQSGSEYYSTEWNLVTKTYEVYKNPNDYPQKEDFPNINAIIITGSKASATSDAPWIKKLISFVKDVLFKYPHIKIVGLCFGHQIVAKAAGVPIIQNPKGWEVSSTVVQLTENGEKFFGRKVININQMHQDMAVDVPEGFELLGSTEDCEFQIFYKPRQALTFQGHPEFSTEVVNTMVKVLRGTEVFTEQQKEEALKRSENPADNDFLAVSIVKFLLE.

In terms of domain architecture, Glutamine amidotransferase type-1 spans 13 to 217 (PMVEITSAYG…VKVLRGTEVF (205 aa)).

The chain is Putative glutamine amidotransferase-like protein C13C5.04 from Schizosaccharomyces pombe (strain 972 / ATCC 24843) (Fission yeast).